The chain runs to 207 residues: 8-oxoguanine DNA glycosylase/AP lyase (207 aa).

Residues K128 and D146 contribute to the active site.

This sequence belongs to the type-2 OGG1 family.

The catalysed reaction is 2'-deoxyribonucleotide-(2'-deoxyribose 5'-phosphate)-2'-deoxyribonucleotide-DNA = a 3'-end 2'-deoxyribonucleotide-(2,3-dehydro-2,3-deoxyribose 5'-phosphate)-DNA + a 5'-end 5'-phospho-2'-deoxyribonucleoside-DNA + H(+). Functionally, catalyzes the excision of an oxidatively damaged form of guanine (7,8-dihydro-8-oxoguanine = 8-oxoG) from DNA. Also cleaves the DNA backbone at apurinic/apyrimidinic sites (AP sites). The polypeptide is 8-oxoguanine DNA glycosylase/AP lyase (Saccharolobus solfataricus (strain ATCC 35092 / DSM 1617 / JCM 11322 / P2) (Sulfolobus solfataricus)).